We begin with the raw amino-acid sequence, 867 residues long: Translation initiation factor IF-2 (867 aa).

Residues 367 to 534 (TRAPVVTIMG…AILLQSEILE (168 aa)) enclose the tr-type G domain. The tract at residues 376–383 (GHVDHGKT) is G1. 376 to 383 (GHVDHGKT) provides a ligand contact to GTP. A G2 region spans residues 401 to 405 (GITQN). Positions 422–425 (DTPG) are G3. GTP contacts are provided by residues 422-426 (DTPGH) and 476-479 (NKID). The G4 stretch occupies residues 476-479 (NKID). The tract at residues 512–514 (SAK) is G5.

This sequence belongs to the TRAFAC class translation factor GTPase superfamily. Classic translation factor GTPase family. IF-2 subfamily.

Its subcellular location is the cytoplasm. Functionally, one of the essential components for the initiation of protein synthesis. Protects formylmethionyl-tRNA from spontaneous hydrolysis and promotes its binding to the 30S ribosomal subunits. Also involved in the hydrolysis of GTP during the formation of the 70S ribosomal complex. The sequence is that of Translation initiation factor IF-2 from Buchnera aphidicola subsp. Schizaphis graminum (strain Sg).